The chain runs to 895 residues: MTEESEETVLYIEHRYVCSECNQLYGSLEEVLMHQNSHVPQQHFELVGVADPGVTVATDTASGTGLYQTLVQESQYQCLECGQLLMSPSQLLEHQELHLKMMAPQEAVPAEPPPKAPPLSSSTIHYECVDCKALFASQELWLNHRQTHLRATPTKAPAPVVLGSPVVLGPPVGQARVAVEHSYRKAEEGGEGATVPSAAATTTEVVTEVELLLYKCSECSQLFQLPADFLEHQATHFPAPVPESQEPALQQEVQASSPAEVPVSQPDPLPASDHSYELRNGEAIGRDRRGRRARRNNSGEAGGAATQELFCSACDQLFLSPHQLQQHLRSHREGVFKCPLCSRVFPSPSSLDQHLGDHSSESHFLCVDCGLAFGTEALLLAHRRAHTPNPLHSCPCGKTFVNLTKFLYHRRTHGVGGVPLPTTPVPPEEPVIGFPEPAPAETGEPEAPEPPVSEETSAGPAAPGTYRCLLCSREFGKALQLTRHQRFVHRLERRHKCSICGKMFKKKSHVRNHLRTHTGERPFPCPDCSKPFNSPANLARHRLTHTGERPYRCGDCGKAFTQSSTLRQHRLVHAQHFPYRCQECGVRFHRPYRLLMHRYHHTGEYPYKCRECPRSFLLRRLLEVHQLVVHAGRQPHRCPSCGAAFPSSLRLREHRCAAAAAQAPRRFECGTCGKKVGSAARLQAHEAAHAAAGPGEVLAKEPPAPRAPRATRAPVASPAALGGTATASPAPARRRGLECSECKKLFSTETSLQVHRRIHTGERPYPCPDCGKAFRQSTHLKDHRRLHTGERPFACEVCGKAFAISMRLAEHRRIHTGERPYSCPDCGKSYRSFSNLWKHRKTHQQQHQAAVRQQLAEAEAAVGLAVMETAVEALPLVEAIEIYPLAEAEGVQISG.

3 C2H2-type zinc fingers span residues 16–38 (YVCS…QNSH), 76–98 (YQCL…QELH), and 126–148 (YECV…RQTH). S164 is modified (phosphoserine). The segment at 214 to 236 (YKCSECSQLFQLPADFLEHQATH) adopts a C2H2-type 4 zinc-finger fold. Residues 239–301 (APVPESQEPA…RARRNNSGEA (63 aa)) form a disordered region. The segment covering 247–257 (PALQQEVQASS) has biased composition (polar residues). Positions 274-287 (HSYELRNGEAIGRD) are enriched in basic and acidic residues. S298 carries the phosphoserine modification. 4 consecutive C2H2-type zinc fingers follow at residues 309–331 (LFCS…LRSH), 336–358 (FKCP…LGDH), 364–386 (FLCV…RRAH), and 392–413 (HSCP…RRTH). The tract at residues 434-460 (FPEPAPAETGEPEAPEPPVSEETSAGP) is disordered. 6 C2H2-type zinc fingers span residues 466 to 489 (YRCL…RFVH), 495 to 517 (HKCS…LRTH), 523 to 545 (FPCP…RLTH), 551 to 573 (YRCG…RLVH), 579 to 601 (YRCQ…RYHH), and 607 to 630 (YKCR…LVVH). The segment at 636–659 (HRCPSCGAAFPSSLRLREHRCAAA) adopts a C2H2-type 15; degenerate zinc-finger fold. The segment at 667-689 (FECGTCGKKVGSAARLQAHEAAH) adopts a C2H2-type 16 zinc-finger fold. The disordered stretch occupies residues 687-732 (AAHAAAGPGEVLAKEPPAPRAPRATRAPVASPAALGGTATASPAPA). A compositionally biased stretch (low complexity) spans 707–731 (APRATRAPVASPAALGGTATASPAP). At S717 the chain carries Phosphoserine. T724 bears the Phosphothreonine mark. S728 is subject to Phosphoserine. C2H2-type zinc fingers lie at residues 737–759 (LECS…RRIH), 765–787 (YPCP…RRLH), 793–815 (FACE…RRIH), and 821–843 (YSCP…RKTH). Position 831 is an asymmetric dimethylarginine (R831).

This sequence belongs to the krueppel C2H2-type zinc-finger protein family.

It localises to the nucleus. Functionally, may be involved in transcriptional regulation. This Pongo abelii (Sumatran orangutan) protein is Zinc finger protein 574 (ZNF574).